Reading from the N-terminus, the 594-residue chain is UvrABC system protein C (594 aa).

Residues 14–91 (DQPGCYLMKD…IKKHDPKYNI (78 aa)) enclose the GIY-YIG domain. The region spanning 196 to 231 (KEVRSELETKMYEASEKLEFERAKELRDQIAHIDAI) is the UVR domain.

It belongs to the UvrC family. Interacts with UvrB in an incision complex.

It localises to the cytoplasm. The UvrABC repair system catalyzes the recognition and processing of DNA lesions. UvrC both incises the 5' and 3' sides of the lesion. The N-terminal half is responsible for the 3' incision and the C-terminal half is responsible for the 5' incision. This Bacillus thuringiensis (strain Al Hakam) protein is UvrABC system protein C.